Consider the following 623-residue polypeptide: Glutathione import ATP-binding protein GsiA (623 aa).

ABC transporter domains lie at 15–269 and 314–564; these read VENL…RALL and LRVR…RKLL. Residues 49–56 and 357–364 each bind ATP; these read GESGSGKS.

It belongs to the ABC transporter superfamily. Glutathione importer (TC 3.A.1.5.11) family. The complex is composed of two ATP-binding proteins (GsiA), two transmembrane proteins (GsiC and GsiD) and a solute-binding protein (GsiB).

It is found in the cell inner membrane. The catalysed reaction is glutathione(out) + ATP + H2O = glutathione(in) + ADP + phosphate + H(+). Its activity is regulated as follows. Inhibited by verapamil but not by carbonyl cyanide m-chlorophenylhydrazone (CCCP). In terms of biological role, part of the ABC transporter complex GsiABCD involved in glutathione import. Responsible for energy coupling to the transport system. The sequence is that of Glutathione import ATP-binding protein GsiA from Escherichia coli (strain K12).